The sequence spans 928 residues: Protein NETWORKED 2B (928 aa).

One can recognise an NAB domain in the interval 10–90; the sequence is YSWWWASHIR…ERYDHLSTEL (81 aa). The interval 108-144 is disordered; it reads PLVDDDDDDDDDNPKKPPKHLHLIPSGTNIPQVPEVP. The segment covering 110 to 119 has biased composition (acidic residues); that stretch reads VDDDDDDDDD. Coiled-coil stretches lie at residues 207–309 and 360–445; these read SYEQ…AKKA and ALLK…VKMD. Disordered regions lie at residues 447–472 and 489–529; these read DVEG…SISN and KQSR…EERR. Residues 457–468 show a composition bias toward acidic residues; the sequence is DIQEEDTVEDSD. A compositionally biased stretch (basic and acidic residues) spans 489-506; that stretch reads KQSRDQESMQEEKSETRD. A coiled-coil region spans residues 547 to 574; sequence LLDEYSSVLRDYREVKRKLSEVEKKNRD. A disordered region spans residues 620-651; that stretch reads AESVSISHSSNSSFSMPPLPQRGDLKRASEQE. Positions 622 to 634 are enriched in low complexity; the sequence is SVSISHSSNSSFS. Basic and acidic residues predominate over residues 642–651; the sequence is GDLKRASEQE.

This sequence belongs to the NET family.

In terms of biological role, plant-specific actin binding protein. May be part of a membrane-cytoskeletal adapter complex. This Arabidopsis thaliana (Mouse-ear cress) protein is Protein NETWORKED 2B.